The chain runs to 935 residues: Non-structural polyprotein 1A (935 aa).

The stretch at 104 to 142 forms a coiled coil; that stretch reads KLIHKANALQERLRLSQEEKATLALDVQFLQHENVRLKE. 4 consecutive transmembrane segments (helical) span residues 239-259, 286-306, 313-333, and 344-364; these read VFYYIHYYEMWNIFMFVLAIG, VLPTIPFHTTMTLWVMNTLMV, LLAITLAILAPILGIIFLCFM, and GLIATAVLIAGGHACLTLTGT. Catalysis depends on charge relay system; for serine protease activity residues histidine 461, aspartate 489, and serine 551. Positions 587–620 form a coiled coil; the sequence is VKAPSQVELLKEEIERLKAQLNSATENATTVVTQ. An O-(5'-phospho-RNA)-tyrosine modification is found at tyrosine 693. Disordered stretches follow at residues 756–828 and 915–935; these read AKPI…YSQT and NKAPKNYKGPQKTKGPKTTTH. Low complexity predominate over residues 922–935; the sequence is KGPQKTKGPKTTTH.

This sequence belongs to the astroviridae polyprotein 1A family. As to quaternary structure, monomer. In terms of processing, cleaved by the viral and host proteases. The protease is probably autocatalytically cleaved.

It localises to the host membrane. The enzyme catalyses RNA(n) + a ribonucleoside 5'-triphosphate = RNA(n+1) + diphosphate. In terms of biological role, responsible for the cleavage of the polyprotein into functional products. Its function is as follows. Protein covalently attached to the 5' extremity of the genomic and subgenomic RNAs. It may serve as a primer for the replicase. The sequence is that of Non-structural polyprotein 1A (ORF1) from Human astrovirus-1 (HAstV-1).